A 291-amino-acid chain; its full sequence is uncharacterized protein (291 aa).

This is an uncharacterized protein from Acanthamoeba polyphaga mimivirus (APMV).